Here is a 438-residue protein sequence, read N- to C-terminus: Glycogen synthase (438 aa).

Lys-16 provides a ligand contact to ADP-alpha-D-glucose.

It belongs to the glycosyltransferase 1 family. Bacterial/plant glycogen synthase subfamily.

It carries out the reaction [(1-&gt;4)-alpha-D-glucosyl](n) + ADP-alpha-D-glucose = [(1-&gt;4)-alpha-D-glucosyl](n+1) + ADP + H(+). It participates in glycan biosynthesis; glycogen biosynthesis. Functionally, synthesizes alpha-1,4-glucan chains using ADP-glucose. This chain is Glycogen synthase, found in Thermus caldophilus.